We begin with the raw amino-acid sequence, 137 residues long: uncharacterized protein (137 aa).

The disordered stretch occupies residues 67-87 (KSERQHQRVHHELPHDKPRQS). The segment covering 70–85 (RQHQRVHHELPHDKPR) has biased composition (basic and acidic residues).

This is an uncharacterized protein from Human cytomegalovirus (strain AD169) (HHV-5).